Consider the following 223-residue polypeptide: Cytidylate kinase (223 aa).

10–18 (GPASSGKST) lines the ATP pocket.

This sequence belongs to the cytidylate kinase family. Type 1 subfamily.

The protein localises to the cytoplasm. The enzyme catalyses CMP + ATP = CDP + ADP. The catalysed reaction is dCMP + ATP = dCDP + ADP. The sequence is that of Cytidylate kinase from Streptococcus pneumoniae (strain Hungary19A-6).